The sequence spans 369 residues: Protein-glutamate methylesterase/protein-glutamine glutaminase 1 (369 aa).

The 118-residue stretch at 11–128 (RVLIVDDSAA…DLERQEASIR (118 aa)) folds into the Response regulatory domain. 4-aspartylphosphate is present on D62. Residues 136–168 (ATETTRRRSQPEPRPLAPGPKLTADEILPARPP) are disordered. In terms of domain architecture, CheB-type methylesterase spans 170-358 (PVPETMPVVC…LDRLAARIME (189 aa)). Residues S183, H209, and D305 contribute to the active site.

It belongs to the CheB family. Post-translationally, phosphorylated by CheA. Phosphorylation of the N-terminal regulatory domain activates the methylesterase activity.

Its subcellular location is the cytoplasm. The enzyme catalyses [protein]-L-glutamate 5-O-methyl ester + H2O = L-glutamyl-[protein] + methanol + H(+). It catalyses the reaction L-glutaminyl-[protein] + H2O = L-glutamyl-[protein] + NH4(+). Functionally, involved in chemotaxis. Part of a chemotaxis signal transduction system that modulates chemotaxis in response to various stimuli. Catalyzes the demethylation of specific methylglutamate residues introduced into the chemoreceptors (methyl-accepting chemotaxis proteins or MCP) by CheR. Also mediates the irreversible deamidation of specific glutamine residues to glutamic acid. The polypeptide is Protein-glutamate methylesterase/protein-glutamine glutaminase 1 (Cereibacter sphaeroides (strain ATCC 17023 / DSM 158 / JCM 6121 / CCUG 31486 / LMG 2827 / NBRC 12203 / NCIMB 8253 / ATH 2.4.1.) (Rhodobacter sphaeroides)).